We begin with the raw amino-acid sequence, 85 residues long: Probable Thioredoxin (85 aa).

Positions 2–85 (VVNIEVFTSP…LFEAINDEME (84 aa)) constitute a Glutaredoxin domain. Cysteines 13 and 16 form a disulfide.

It belongs to the glutaredoxin family.

It is found in the cytoplasm. Acts to maintain redox homeostasis; functions as a protein disulfide reductase. This is Probable Thioredoxin from Methanothermobacter thermautotrophicus (strain ATCC 29096 / DSM 1053 / JCM 10044 / NBRC 100330 / Delta H) (Methanobacterium thermoautotrophicum).